We begin with the raw amino-acid sequence, 498 residues long: NAD(P)H-quinone oxidoreductase subunit 2, chloroplastic (498 aa).

Helical transmembrane passes span 18 to 38, 51 to 71, 87 to 107, 111 to 131, 134 to 154, 168 to 188, 211 to 231, 244 to 264, 278 to 298, 306 to 326, 337 to 357, 379 to 399, 411 to 431, and 470 to 490; these read LTIL…VIDL, ISMV…GFFT, FFLL…ILCS, LAEF…LSCA, LVTI…LSGY, FLLM…LLYG, IIYL…SLFP, PTPV…ALFT, WHVA…LIAV, MLAF…LSAD, YTFI…LFGL, FSLV…GFFG, GLYS…YYYL, and IAMI…DPII.

The protein belongs to the complex I subunit 2 family. NDH is composed of at least 16 different subunits, 5 of which are encoded in the nucleus.

It localises to the plastid. The protein resides in the chloroplast thylakoid membrane. It carries out the reaction a plastoquinone + NADH + (n+1) H(+)(in) = a plastoquinol + NAD(+) + n H(+)(out). The enzyme catalyses a plastoquinone + NADPH + (n+1) H(+)(in) = a plastoquinol + NADP(+) + n H(+)(out). Functionally, NDH shuttles electrons from NAD(P)H:plastoquinone, via FMN and iron-sulfur (Fe-S) centers, to quinones in the photosynthetic chain and possibly in a chloroplast respiratory chain. The immediate electron acceptor for the enzyme in this species is believed to be plastoquinone. Couples the redox reaction to proton translocation, and thus conserves the redox energy in a proton gradient. The sequence is that of NAD(P)H-quinone oxidoreductase subunit 2, chloroplastic from Adiantum capillus-veneris (Maidenhair fern).